The following is a 579-amino-acid chain: MTIEFSNFSFRYESLDKPTLKNINLRIEKGEKIVIIGPSGSGKSTLGQCLNGLIPHAIKGETSGTLTIYGQDTAPFDMHQYTEQVGTVLQDTDSQFVGLSIGEDIAFALENQLTSNIDMYPLVKATAKMVDLEQMLDRSPHDLSGGQKQRVSLAGILVDDVDILLFDEPLAALDPKTGKKTIEIIDDLHRETGKTIVIIEHRLEDVLHRSVDRIILMESGEIIADTTPDEILASPLLEDYGIREPLYISALKEAGCAIEGDAKPSSLTTLPLEQYKPTVQAWFDGSTAQPPKTPAETLLEVRGLTYSYDGEKNALEDVSFDIKRGEFVSVLGKNGSGKSTITKLIMGVIEADSGSMSMNGQDLNELTIFERSQKVGVVMQNPNHMISHHMIFDEVAFGLRNRGIKEKQIEAKVLEVLELCGLSKYRHWPIEALSYGQKKRVTIASILVLEPELLILDEPTAGQDYRNYTSMLSFIEKLNRELGVTVMIISHDMHLVLEYTTRSIVIADSKLVADAPMTQVFSSPELLDQANLTTTSLFDLATKVGIEDTNGFMQHFINVEKAHRQQKSGEVNQPEKAVA.

ABC transporter domains lie at 3 to 244 (IEFS…GIRE) and 299 to 533 (LEVR…ANLT). Residues 37–44 (GPSGSGKS) and 332–339 (GKNGSGKS) contribute to the ATP site.

This sequence belongs to the ABC transporter superfamily.

Its subcellular location is the cell inner membrane. Functionally, probably part of an ABC transporter complex. Responsible for energy coupling to the transport system. This Vibrio parahaemolyticus serotype O3:K6 (strain RIMD 2210633) protein is Putative ABC transporter ATP-binding protein VPA1482.